Consider the following 89-residue polypeptide: Small ribosomal subunit protein uS15 (89 aa).

Belongs to the universal ribosomal protein uS15 family. Part of the 30S ribosomal subunit. Forms a bridge to the 50S subunit in the 70S ribosome, contacting the 23S rRNA.

Functionally, one of the primary rRNA binding proteins, it binds directly to 16S rRNA where it helps nucleate assembly of the platform of the 30S subunit by binding and bridging several RNA helices of the 16S rRNA. In terms of biological role, forms an intersubunit bridge (bridge B4) with the 23S rRNA of the 50S subunit in the ribosome. The chain is Small ribosomal subunit protein uS15 from Nitratidesulfovibrio vulgaris (strain DP4) (Desulfovibrio vulgaris).